Reading from the N-terminus, the 356-residue chain is MKKKVLVGMSGGVDSSVAAYLLKEQGYEVIGVTMQIWQDDEEFIEKEGGCCSLSAVADARRVANKIGIPFYVMNFKDAFKRNVIDYFVDEYMEGRTPNPCIACNKFIKFSSFLDKAMAIGIDYVATGHYAIIEKHNDRYIIKKSEDDKKDQTYALYNLTQFQLERTLMPCGQYKKSKIREIAKEIGLRVHNKKDSEEICFIPDNDHGRYIKNRFPNKVREGNFVDKQGNILGTHKGIVYYTIGQRKGLGIAFGKPMYVVDINPFRNEVVLGDLEDLLNTKLIAKDTNYIPFDTLKEPMEVEAKIRYSQTPSKAIITPIEDGRVRVNFHEKQRAITKGQSVVFYKDDLLIGGGIIEK.

ATP is bound by residues 8–15 and Met34; that span reads GMSGGVDS. Cys103 functions as the Nucleophile in the catalytic mechanism. A disulfide bridge links Cys103 with Cys199. ATP is bound at residue Gly127. The interaction with tRNA stretch occupies residues 149-151; it reads KDQ. Catalysis depends on Cys199, which acts as the Cysteine persulfide intermediate. Residues 305-306 are interaction with tRNA; sequence RY.

It belongs to the MnmA/TRMU family.

The protein resides in the cytoplasm. The enzyme catalyses S-sulfanyl-L-cysteinyl-[protein] + uridine(34) in tRNA + AH2 + ATP = 2-thiouridine(34) in tRNA + L-cysteinyl-[protein] + A + AMP + diphosphate + H(+). Its function is as follows. Catalyzes the 2-thiolation of uridine at the wobble position (U34) of tRNA, leading to the formation of s(2)U34. The sequence is that of tRNA-specific 2-thiouridylase MnmA 1 from Clostridium botulinum (strain ATCC 19397 / Type A).